The chain runs to 291 residues: Elongation factor Ts (291 aa).

Positions 79 to 82 are involved in Mg(2+) ion dislocation from EF-Tu; it reads TDFV.

This sequence belongs to the EF-Ts family.

The protein resides in the cytoplasm. In terms of biological role, associates with the EF-Tu.GDP complex and induces the exchange of GDP to GTP. It remains bound to the aminoacyl-tRNA.EF-Tu.GTP complex up to the GTP hydrolysis stage on the ribosome. This chain is Elongation factor Ts, found in Dinoroseobacter shibae (strain DSM 16493 / NCIMB 14021 / DFL 12).